We begin with the raw amino-acid sequence, 175 residues long: Large ribosomal subunit protein eL14 (175 aa).

Residues 150 to 175 (KAAKMDSTEGAKRRMQKAIAARKAKK) are disordered. Residues 152-161 (AKMDSTEGAK) show a composition bias toward basic and acidic residues. A compositionally biased stretch (basic residues) spans 162–175 (RRMQKAIAARKAKK).

This sequence belongs to the eukaryotic ribosomal protein eL14 family.

Its function is as follows. Component of the large ribosomal subunit. The ribosome is a large ribonucleoprotein complex responsible for the synthesis of proteins in the cell. The protein is Large ribosomal subunit protein eL14 (RPL14) of Leishmania donovani.